The sequence spans 323 residues: Dolichyl-phosphate beta-glucosyltransferase ALG5A (323 aa).

Residues 1-5 lie on the Lumenal side of the membrane; that stretch reads MKFWR. The chain crosses the membrane as a helical span at residues 6–26; that stretch reads FVQILFFLGVAAVGLVVAVMI. Over 27–323 the chain is Cytoplasmic; that stretch reads ANADDTTLFD…GAWKIRDRRH (297 aa).

It belongs to the glycosyltransferase 2 family.

The protein resides in the endoplasmic reticulum membrane. The catalysed reaction is a di-trans,poly-cis-dolichyl phosphate + UDP-alpha-D-glucose = a di-trans,poly-cis-dolichyl beta-D-glucosyl phosphate + UDP. Its pathway is protein modification; protein glycosylation. In terms of biological role, dolichyl-phosphate beta-glucosyltransferase involved in the glycosylation of glycoproteins through the synthesis of dolichyl beta-D-glucosyl phosphate which serves as a sugar donor for transfer of three glucose residues to the Man-9-GlcNAc-2-PP-dolichol precursor to N-glycans. This chain is Dolichyl-phosphate beta-glucosyltransferase ALG5A, found in Trichomonas vaginalis (strain ATCC PRA-98 / G3).